We begin with the raw amino-acid sequence, 986 residues long: Vacuolar membrane protease (986 aa).

Topologically, residues 1-20 are cytoplasmic; the sequence is MATPRAQKFNPIAFTPGPVT. Residues 21–41 traverse the membrane as a helical segment; sequence LITTIVYLALLIPILVISLVV. Residues 42–392 are Vacuolar-facing; the sequence is PPAPETSPEG…AFAVFRLHTL (351 aa). Residues Asn-53, Asn-116, and Asn-119 are each glycosylated (N-linked (GlcNAc...) asparagine). Zn(2+) contacts are provided by His-175 and Asp-187. Glu-221 functions as the Proton acceptor in the catalytic mechanism. Glu-222 is a Zn(2+) binding site. The N-linked (GlcNAc...) asparagine glycan is linked to Asn-238. Zn(2+)-binding residues include Glu-247 and His-320. Residues 393–413 form a helical membrane-spanning segment; it reads FALSVTLLIVAPLVIFITAIV. Residues 414–447 lie on the Cytoplasmic side of the membrane; sequence LSKTDRMYLFSMSKSLGGTDERVSLRGLRGLFRT. The chain crosses the membrane as a helical span at residues 448–468; sequence PIILAVATVIPIGLAYLLEKV. Residues 469-477 are Vacuolar-facing; the sequence is NPYIVHSSQ. Residues 478 to 498 form a helical membrane-spanning segment; that stretch reads FSVWSMMISVWIFLAWFLACA. At 499–509 the chain is on the cytoplasmic side; that stretch reads ADFFRPSALHR. A helical membrane pass occupies residues 510–530; it reads AYSYTWIFIATWVMLVINTVY. Residues 531–534 are Vacuolar-facing; it reads ANQK. The chain crosses the membrane as a helical span at residues 535–555; it reads GIAAGYFVFFYFSGSFLATWV. Residues 556–665 lie on the Cytoplasmic side of the membrane; the sequence is SYLELFALPR…WSWTLPRWTW (110 aa). The tract at residues 595–620 is disordered; sequence ELPSDTGPHAEYPGDADETDPTESTS. The helical transmembrane segment at 666–686 threads the bilayer; that stretch reads VLQLLLLAPIVLILVGQLALF. The Vacuolar segment spans residues 687–702; the sequence is LTTSMSQVGSDGVSTF. Residues 703–723 traverse the membrane as a helical segment; that stretch reads IVYLACAVFTTLLFAPLFPFI. At 724-729 the chain is on the cytoplasmic side; that stretch reads HRFTYH. A helical membrane pass occupies residues 730–750; the sequence is IPTFLFLVFVGTLIYNLVAFP. The Vacuolar portion of the chain corresponds to 751–986; sequence FSPANRLKMF…VEASHGITIQ (236 aa). Residues Asn-797, Asn-840, and Asn-948 are each glycosylated (N-linked (GlcNAc...) asparagine).

It belongs to the peptidase M28 family. The cofactor is Zn(2+).

It is found in the vacuole membrane. Functionally, may be involved in vacuolar sorting and osmoregulation. This chain is Vacuolar membrane protease, found in Blastomyces gilchristii (strain SLH14081) (Blastomyces dermatitidis).